A 407-amino-acid polypeptide reads, in one-letter code: Phosphopentomutase (407 aa).

Mn(2+) contacts are provided by Asp10, Asp306, His311, Asp347, His348, and His359.

It belongs to the phosphopentomutase family. Mn(2+) is required as a cofactor.

The protein resides in the cytoplasm. It carries out the reaction 2-deoxy-alpha-D-ribose 1-phosphate = 2-deoxy-D-ribose 5-phosphate. The catalysed reaction is alpha-D-ribose 1-phosphate = D-ribose 5-phosphate. It functions in the pathway carbohydrate degradation; 2-deoxy-D-ribose 1-phosphate degradation; D-glyceraldehyde 3-phosphate and acetaldehyde from 2-deoxy-alpha-D-ribose 1-phosphate: step 1/2. Isomerase that catalyzes the conversion of deoxy-ribose 1-phosphate (dRib-1-P) and ribose 1-phosphate (Rib-1-P) to deoxy-ribose 5-phosphate (dRib-5-P) and ribose 5-phosphate (Rib-5-P), respectively. This Photorhabdus laumondii subsp. laumondii (strain DSM 15139 / CIP 105565 / TT01) (Photorhabdus luminescens subsp. laumondii) protein is Phosphopentomutase.